The sequence spans 362 residues: MRDETPERPAPLRFGYTTGSCATATSLAAARLLLTGRADDAVEIVLPKGQRVMMRLEFCRATADGAEAGTIKDAGDDPDVTHGALIFARVALGGARGVRFHAGPGVGTVTRAGLALPIGEPAINPVPRQMMTTHLDALAAEQGYTGGFDVTIGVEGGEALALKTMNPRLGIVGGLSILGTTGIVRPFSCSAYIASIHQGIDVARANGVAHIAACTGNASEDAMRAHYGLPDIALIEMGDFAGAVLKHLRRAPVARLSMCGGFGKLSKLAAGHLDLHSRHSSIDLPLLAQWARDAGASDALQAAIRAANTSVEALALAGADGVPLGDVVCAHALRVARDIVPASVAVEMFAIDRQGRFVGSAR.

This sequence belongs to the CbiD family.

The catalysed reaction is Co-precorrin-5B + S-adenosyl-L-methionine = Co-precorrin-6A + S-adenosyl-L-homocysteine. It functions in the pathway cofactor biosynthesis; adenosylcobalamin biosynthesis; cob(II)yrinate a,c-diamide from sirohydrochlorin (anaerobic route): step 6/10. Its function is as follows. Catalyzes the methylation of C-1 in cobalt-precorrin-5B to form cobalt-precorrin-6A. The polypeptide is Cobalt-precorrin-5B C(1)-methyltransferase (Burkholderia multivorans (strain ATCC 17616 / 249)).